The primary structure comprises 445 residues: MGRLFGTDGVRGLANTELTAELALQVASAAATVLASPGSGGRKTAVVGRDPRASGEMLEAAVVAGLTSAGVDVLNVGVLPTPAVAYLTAALDAALGVMISASHNPMPDNGIKIFAAGGHKLDDEVEDRIEAVAAGTTTRRAPTGAGIGRVRTVPDAAERYLQHLATALPNSLDGLTVVVDCAHGAASGVAPAAYRAAGATVVAINAEPDGLNINENCGSTHLESLQKAVVEHGADLGLAHDGDADRCLAVDAAGSLIDGDAIMTVLALGMRDAGELVDNTLVATVMSNLGLHIAMREAGITLVTTAVGDRYVLEGLRSGGFSLGGEQSGHVVFPAFGTTGDGVLTGLRLMGRMAETGQAIADLASAMTALPQVLVNVRVADKRAVAASPVVLDAVVAAERSLGDNGRVLLRPSGTEQLVRVMVEASDIEVARKLADELAGTVASV.

Ser102 serves as the catalytic Phosphoserine intermediate. Ser102, Asp241, Asp243, and Asp245 together coordinate Mg(2+). Ser102 carries the phosphoserine modification.

It belongs to the phosphohexose mutase family. The cofactor is Mg(2+). Post-translationally, activated by phosphorylation.

It catalyses the reaction alpha-D-glucosamine 1-phosphate = D-glucosamine 6-phosphate. Its function is as follows. Catalyzes the conversion of glucosamine-6-phosphate to glucosamine-1-phosphate. In Rhodococcus jostii (strain RHA1), this protein is Phosphoglucosamine mutase.